Consider the following 267-residue polypeptide: Interleukin-1 beta (267 aa).

A propeptide spanning residues 1–115 (MAPVPELTSE…DTWDDGFVCD (115 aa)) is cleaved from the precursor.

It belongs to the IL-1 family. As to quaternary structure, monomer. In its precursor form, weakly interacts with full-length MEFV; the mature cytokine does not interact at all. Interacts with integrins ITGAV:ITGBV and ITGA5:ITGB1; integrin-binding is required for IL1B signaling. Interacts with cargo receptor TMED10; the interaction is direct and is required for the secretion of IL1B mature form. Interacts with HSP90AB1; the interaction facilitates cargo translocation into the ERGIC. Interacts with HSP90B1; the interaction facilitates cargo translocation into the ERGIC.

It is found in the cytoplasm. The protein resides in the cytosol. Its subcellular location is the secreted. The protein localises to the lysosome. It localises to the extracellular exosome. Potent pro-inflammatory cytokine. Initially discovered as the major endogenous pyrogen, induces prostaglandin synthesis, neutrophil influx and activation, T-cell activation and cytokine production, B-cell activation and antibody production, and fibroblast proliferation and collagen production. Promotes Th17 differentiation of T-cells. Synergizes with IL12/interleukin-12 to induce IFNG synthesis from T-helper 1 (Th1) cells. Plays a role in angiogenesis by inducing VEGF production synergistically with TNF and IL6. Involved in transduction of inflammation downstream of pyroptosis: its mature form is specifically released in the extracellular milieu by passing through the gasdermin-D (GSDMD) pore. This is Interleukin-1 beta (IL1B) from Felis catus (Cat).